A 360-amino-acid polypeptide reads, in one-letter code: MTKKIIFTGGGTAGHVTLNLILIPKFIKDGWEVHYIGDDNGIEHQEIKKSGLDVTFHAIATGKLRRYFSWQNLLDAFKVGFGVMQSLFIIARLRPKALFSKGGFVSVPPVIAARLLGVPAFIHESDLSMGLANRIAYRFATTMYTTFEQEQTLVKLKHVGAVTKVTAPKSRSVASKQLAAVSEYFDPNLKTLLFIGGSAGARVFNRFITDHPELKEDFNIINISGDPSLNELSRHLYRVDYVTDLYQPLMEMADLVVTRGGSNTLFELLAMRKLQLIIPLGKEASRGDQLENAHYFTTRGYAEQLLEQELTLPHFQEKVREVFAKQSDYLSAMTSSSELQSPESFYQLLSADISSATKEN.

UDP-N-acetyl-alpha-D-glucosamine contacts are provided by residues 12-14 (TAG), Ser-198, and Gln-289.

This sequence belongs to the glycosyltransferase 28 family. MurG subfamily.

The protein localises to the cell membrane. It catalyses the reaction Mur2Ac(oyl-L-Ala-gamma-D-Glu-L-Lys-D-Ala-D-Ala)-di-trans,octa-cis-undecaprenyl diphosphate + UDP-N-acetyl-alpha-D-glucosamine = beta-D-GlcNAc-(1-&gt;4)-Mur2Ac(oyl-L-Ala-gamma-D-Glu-L-Lys-D-Ala-D-Ala)-di-trans,octa-cis-undecaprenyl diphosphate + UDP + H(+). It functions in the pathway cell wall biogenesis; peptidoglycan biosynthesis. Its function is as follows. Cell wall formation. Catalyzes the transfer of a GlcNAc subunit on undecaprenyl-pyrophosphoryl-MurNAc-pentapeptide (lipid intermediate I) to form undecaprenyl-pyrophosphoryl-MurNAc-(pentapeptide)GlcNAc (lipid intermediate II). This is UDP-N-acetylglucosamine--N-acetylmuramyl-(pentapeptide) pyrophosphoryl-undecaprenol N-acetylglucosamine transferase from Streptococcus equi subsp. zooepidemicus (strain MGCS10565).